The chain runs to 184 residues: GTP cyclohydrolase 1 (184 aa).

Zn(2+) is bound by residues Cys-75, His-78, and Cys-146.

Belongs to the GTP cyclohydrolase I family. Toroid-shaped homodecamer, composed of two pentamers of five dimers.

The catalysed reaction is GTP + H2O = 7,8-dihydroneopterin 3'-triphosphate + formate + H(+). It functions in the pathway cofactor biosynthesis; 7,8-dihydroneopterin triphosphate biosynthesis; 7,8-dihydroneopterin triphosphate from GTP: step 1/1. The protein is GTP cyclohydrolase 1 of Streptococcus pneumoniae serotype 2 (strain D39 / NCTC 7466).